The chain runs to 865 residues: V-type proton ATPase 116 kDa subunit a 3 (865 aa).

Topologically, residues 1-409 are cytoplasmic; the sequence is MGSIYRSEHM…VNPAPWTIIS (409 aa). Positions 51–121 form a coiled coil; the sequence is FVNEVRRCDE…NKNCKVLKNN (71 aa). The chain crosses the membrane as a helical span at residues 410–430; it reads FPFLFAVMFGDAGHGIIMLIA. The Extracellular segment spans residues 431–453; it reads ASAFVIFEKKLISMKIKDEIFNT. The chain crosses the membrane as a helical span at residues 454-474; sequence FFGGRYVVLLMGMFAIYTGFI. At 475 to 556 the chain is on the cytoplasmic side; that stretch reads YNDFYSKSVN…FLNPMKMKTS (82 aa). Residues 557 to 577 traverse the membrane as a helical segment; the sequence is ILLGISQMAFGIMLSLMNHIG. N578 carries an N-linked (GlcNAc...) asparagine glycan. Topologically, residues 578-583 are extracellular; the sequence is NRSVVD. A helical transmembrane segment spans residues 584 to 604; it reads IVFVFIPQCLFLGCIFVYLCL. Topologically, residues 605–623 are cytoplasmic; that stretch reads QVLMKWIFFYVKPAYIFGR. Residues 624–644 form a helical membrane-spanning segment; it reads LYPGSNCAPSLLIGLINMFMV. The Extracellular segment spans residues 645-688; sequence KSRDASFAHDVGTAAGKEWVIVNGQNVTYTINDQCYLQQWYPNQ. 2 N-linked (GlcNAc...) asparagine glycosylation sites follow: N670 and N687. The chain crosses the membrane as a helical span at residues 689-709; it reads SLVELILLLIAVVSVPVMLLV. Over 710 to 798 the chain is Cytoplasmic; the sequence is KPFYIRWRHS…LTMGGWGGSA (89 aa). The helical transmembrane segment at 799-819 threads the bilayer; that stretch reads AITILFYFIFSILSVCILILM. The Extracellular segment spans residues 820-865; sequence EGLSAFLHAIRLHWVEFQSKFYGGTGIQFEPFCFTKIIRVYEGLDQ.

The protein belongs to the V-ATPase 116 kDa subunit family. V-ATPase is a heteromultimeric enzyme made up of two complexes: the ATP-hydrolytic V1 complex and the proton translocation V0 complex. The V1 complex consists of three catalytic AB heterodimers that form a heterohexamer, three peripheral stalks each consisting of EG heterodimers, one central rotor including subunits D and F, and the regulatory subunits C and H. The proton translocation complex V0 consists of the proton transport subunit a, a ring of proteolipid subunits c9c'', rotary subunit d, subunits e and f, and the accessory subunits vah-19/Ac45 and vah-20/PRR. Interacts with V-type proton ATPase subunit C vha-11.

The protein resides in the apical cell membrane. In terms of biological role, subunit of the V0 complex of vacuolar(H+)-ATPase (V-ATPase), a multisubunit enzyme composed of a peripheral complex (V1) that hydrolyzes ATP and a membrane integral complex (V0) that translocates protons. V-ATPase is responsible for acidifying and maintaining the pH of intracellular compartments and in some cell types, is targeted to the plasma membrane, where it is responsible for acidifying the extracellular environment. In the intestine, required for the rhythmic defecation behavior by promoting acidification in the gut lumen following defecation. Also, luminal acidification is required for nutrient uptake. The protein is V-type proton ATPase 116 kDa subunit a 3 of Caenorhabditis elegans.